The primary structure comprises 154 residues: D-aminoacyl-tRNA deacylase (154 aa).

The Gly-cisPro motif, important for rejection of L-amino acids signature appears at 142–143 (GP).

The protein belongs to the DTD family. In terms of assembly, homodimer.

The protein localises to the cytoplasm. It carries out the reaction glycyl-tRNA(Ala) + H2O = tRNA(Ala) + glycine + H(+). It catalyses the reaction a D-aminoacyl-tRNA + H2O = a tRNA + a D-alpha-amino acid + H(+). Functionally, an aminoacyl-tRNA editing enzyme that deacylates mischarged D-aminoacyl-tRNAs. Also deacylates mischarged glycyl-tRNA(Ala), protecting cells against glycine mischarging by AlaRS. Acts via tRNA-based rather than protein-based catalysis; rejects L-amino acids rather than detecting D-amino acids in the active site. By recycling D-aminoacyl-tRNA to D-amino acids and free tRNA molecules, this enzyme counteracts the toxicity associated with the formation of D-aminoacyl-tRNA entities in vivo and helps enforce protein L-homochirality. The protein is D-aminoacyl-tRNA deacylase of Acidovorax sp. (strain JS42).